A 60-amino-acid chain; its full sequence is Rubredoxin 4 (60 aa).

The Rubredoxin-like domain maps to 4-55; sequence YKLYQCAQCGFEYDEAVGWPEDGIEPGTRWDDIPEDWSCPDCGAAKSDFFMV. Residues Cys-9, Cys-12, Cys-42, and Cys-45 each contribute to the Fe cation site.

It belongs to the rubredoxin family. Fe(3+) serves as cofactor.

In terms of biological role, involved in the hydrocarbon hydroxylating system, which transfers electrons from NADH to rubredoxin reductase and then through rubredoxin to alkane 1 monooxygenase. The sequence is that of Rubredoxin 4 (rubA4) from Rhodococcus sp. (strain Q15).